The primary structure comprises 364 residues: Flagellar P-ring protein (364 aa).

The N-terminal stretch at 1–21 (MNVFKVFCLMVLLGWQLPAMA) is a signal peptide.

Belongs to the FlgI family. The basal body constitutes a major portion of the flagellar organelle and consists of four rings (L,P,S, and M) mounted on a central rod.

Its subcellular location is the periplasm. The protein resides in the bacterial flagellum basal body. In terms of biological role, assembles around the rod to form the L-ring and probably protects the motor/basal body from shearing forces during rotation. The polypeptide is Flagellar P-ring protein (Pseudoalteromonas translucida (strain TAC 125)).